The sequence spans 85 residues: uncharacterized protein (85 aa).

The N-terminal stretch at 1–19 (MKTIFTVGAVVLATCLLSG) is a signal peptide. C20 carries N-palmitoyl cysteine lipidation. The S-diacylglycerol cysteine moiety is linked to residue C20.

It localises to the cell outer membrane. This is an uncharacterized protein from Escherichia coli (strain K12).